The sequence spans 234 residues: Sugar fermentation stimulation protein homolog (234 aa).

It belongs to the SfsA family.

The chain is Sugar fermentation stimulation protein homolog from Pectobacterium carotovorum subsp. carotovorum (strain PC1).